The primary structure comprises 437 residues: Serine carboxypeptidase-like 17 (437 aa).

An N-terminal signal peptide occupies residues 1-26 (MGKECYYLSWILKFHLLLVLIQLVDS). 3 cysteine pairs are disulfide-bonded: cysteine 85–cysteine 327, cysteine 249–cysteine 263, and cysteine 287–cysteine 293. A glycan (N-linked (GlcNAc...) asparagine) is linked at asparagine 106. Serine 181 is a catalytic residue. Aspartate 362 is an active-site residue. An N-linked (GlcNAc...) asparagine glycan is attached at asparagine 378. Histidine 415 is an active-site residue.

It belongs to the peptidase S10 family. In terms of tissue distribution, expressed in seedlings and siliques.

It is found in the secreted. Probable carboxypeptidase. This chain is Serine carboxypeptidase-like 17 (SCPL17), found in Arabidopsis thaliana (Mouse-ear cress).